A 335-amino-acid chain; its full sequence is Karyogamy protein KAR4 (335 aa).

Positions 1–25 are disordered; the sequence is MAFQDPTYDQNKSRHINNSHLQGPN. Polar residues predominate over residues 16–25; sequence INNSHLQGPN.

It belongs to the MT-A70-like family. In terms of assembly, component of the MIS (mRNA N6-methyladenosine (m6A) methylation) complex, at least composed of IME4, KAR4, MUM2, SLZ1, and VIR1. Interacts with VIR1.

It localises to the nucleus. The protein resides in the cytoplasm. Component of the MIS complex, a complex that mediates N6-methyladenosine (m6A) methylation of meiotic mRNAs and is required for initiation of meiosis, progression through the meiotic divisions and sporulation. May assist STE12 in the pheromone-dependent expression of KAR3 and CIK1. This is Karyogamy protein KAR4 (KAR4) from Saccharomyces cerevisiae (strain ATCC 204508 / S288c) (Baker's yeast).